We begin with the raw amino-acid sequence, 156 residues long: uncharacterized protein (156 aa).

Residues 1-145 (MIIRKFSSKD…DAILMIKKKP (145 aa)) form the N-acetyltransferase domain.

It belongs to the acetyltransferase family.

The protein resides in the cytoplasm. This is an uncharacterized protein from Methanocaldococcus jannaschii (strain ATCC 43067 / DSM 2661 / JAL-1 / JCM 10045 / NBRC 100440) (Methanococcus jannaschii).